Here is a 190-residue protein sequence, read N- to C-terminus: NPTLYGELAKGQSPKFLVFACSDSRVCPSHILDFQPGEAFVVRNIANMVPPYDTIKHSGAGAAIEYAVLHLKVENIVVIGHSCCGGIKGLMSIPDDGTPASDFIEQWVKLGLPAKSKVKANCNNLEFADLCTKCEKEAVNVSLGNLLTYPFVRDALVNKKLSLKGAHYDFVNGAFDLWNLDFGISPSLLQ.

Belongs to the beta-class carbonic anhydrase family. Homohexamer.

It localises to the cytoplasm. It carries out the reaction hydrogencarbonate + H(+) = CO2 + H2O. Reversible hydration of carbon dioxide. This Flaveria linearis (Narrowleaf yellowtops) protein is Carbonic anhydrase 2.